The following is a 520-amino-acid chain: Cytochrome P450 monooxygenase 98 (520 aa).

The chain crosses the membrane as a helical span at residues 7–27 (MLNNNLLIVIGTFAVCVYIVL). Residue C445 coordinates heme.

Belongs to the cytochrome P450 family. Heme is required as a cofactor.

It localises to the membrane. The protein operates within secondary metabolite biosynthesis. Its function is as follows. Cytochrome P450 monooxygenase that is able to use pyrene, phenanthrene, 3,5-dimethoxy-trans-stilbene and 3,5,4'-trimethoxy-trans-stilbene as substrates for oxidation. The protein is Cytochrome P450 monooxygenase 98 of Postia placenta (strain ATCC 44394 / Madison 698-R) (Brown rot fungus).